The primary structure comprises 254 residues: Methyltransferase-like protein 23 (254 aa).

The segment at 1 to 27 (MKSFIFRQNPRKQQQEQNNLVDYSDSD) is disordered. The span at 11–21 (RKQQQEQNNLV) shows a compositional bias: polar residues.

This sequence belongs to the methyltransferase superfamily. METTL23 family.

In terms of biological role, probable methyltransferase. The chain is Methyltransferase-like protein 23 from Dictyostelium discoideum (Social amoeba).